The sequence spans 66 residues: Myrmicitoxin(1)-Pr5a (66 aa).

An N-terminal signal peptide occupies residues 1–25; the sequence is MRSLYLSFSLTIIFVLVIMHAEAKA. Positions 26 to 37 are excised as a propeptide; sequence ISEPNAIAEADP. Residue valine 65 is modified to Valine amide.

Belongs to the formicidae venom clade 3 family. As to expression, expressed by the venom gland.

It localises to the secreted. Functionally, toxin that causes a rapid and irreversible paralysis when intrathoracically injected into insects (blowflies). Does not cause spontaneous nocifensive behaviors by intraplantar injection in mice. Exhibits hemolytic and cytotoxic activities on HEK293 cells. This Pogonomyrmex rugosus (Desert harvester ant) protein is Myrmicitoxin(1)-Pr5a.